Reading from the N-terminus, the 452-residue chain is Tryptophan biosynthesis protein TrpCF (452 aa).

Residues 1–256 (MQTVLAKIVA…AAVRRVLLGE (256 aa)) are indole-3-glycerol phosphate synthase. The interval 257–452 (NKVCGLTRAQ…ASVFQTLRAY (196 aa)) is N-(5'-phosphoribosyl)anthranilate isomerase.

It in the N-terminal section; belongs to the TrpC family. The protein in the C-terminal section; belongs to the TrpF family. In terms of assembly, monomer.

The enzyme catalyses N-(5-phospho-beta-D-ribosyl)anthranilate = 1-(2-carboxyphenylamino)-1-deoxy-D-ribulose 5-phosphate. It catalyses the reaction 1-(2-carboxyphenylamino)-1-deoxy-D-ribulose 5-phosphate + H(+) = (1S,2R)-1-C-(indol-3-yl)glycerol 3-phosphate + CO2 + H2O. It participates in amino-acid biosynthesis; L-tryptophan biosynthesis; L-tryptophan from chorismate: step 3/5. The protein operates within amino-acid biosynthesis; L-tryptophan biosynthesis; L-tryptophan from chorismate: step 4/5. Its function is as follows. Bifunctional enzyme that catalyzes two sequential steps of tryptophan biosynthetic pathway. The first reaction is catalyzed by the isomerase, coded by the TrpF domain; the second reaction is catalyzed by the synthase, coded by the TrpC domain. The chain is Tryptophan biosynthesis protein TrpCF (trpC) from Salmonella typhimurium (strain LT2 / SGSC1412 / ATCC 700720).